Consider the following 904-residue polypeptide: Patched domain-containing protein 4 (904 aa).

The chain crosses the membrane as a helical span at residues 41–61; it reads HPVFFLTVPAVLTITFGLSAL. N149 carries N-linked (GlcNAc...) asparagine glycosylation. An SSD domain is found at 291–450; sequence TRSKVLVSLV…FSFFGSCLVF (160 aa). 6 consecutive transmembrane segments (helical) span residues 295–312, 323–343, 351–371, 394–414, 431–451, and 523–543; these read VLVS…SSSM, GLLG…IFFI, TLLG…FELL, VMVT…MGAS, VSIL…LVFA, and PFVV…CLQI. N-linked (GlcNAc...) asparagine glycosylation is present at N625. A run of 3 helical transmembrane segments spans residues 718–738, 744–764, and 771–791; these read PVLI…FLVI, FWLI…MTLW, and ISIL…APLL. N820 carries N-linked (GlcNAc...) asparagine glycosylation. The next 2 membrane-spanning stretches (helical) occupy residues 823–843 and 845–865; these read SFLI…FTLF and CLLL…PVFL.

It belongs to the patched family.

It is found in the membrane. Functionally, could act as a repressor of canonical hedgehog signaling by antagonizing the effects of SMO, as suggested by down-regulation of hedgehog target genes, including GLI1, PTCH1, and PTCH2 in PTCHD4-expressing cells. This Mus musculus (Mouse) protein is Patched domain-containing protein 4 (Ptchd4).